Reading from the N-terminus, the 320-residue chain is Nicotianamine synthase 1 (320 aa).

Belongs to the nicotianamine synthase (NAS)-like family. In shoots and roots.

It catalyses the reaction 3 S-adenosyl-L-methionine = nicotianamine + 3 S-methyl-5'-thioadenosine + 3 H(+). Functionally, synthesizes nicotianamine, a polyamine which serves as a sensor for the physiological iron status within the plant, and/or might be involved in the transport of iron. The chain is Nicotianamine synthase 1 (NAS1) from Arabidopsis thaliana (Mouse-ear cress).